The following is a 55-amino-acid chain: Large ribosomal subunit protein bL33A (55 aa).

Belongs to the bacterial ribosomal protein bL33 family.

This Mycobacterium ulcerans (strain Agy99) protein is Large ribosomal subunit protein bL33A.